Reading from the N-terminus, the 258-residue chain is Ribosomal RNA large subunit methyltransferase E (258 aa).

S-adenosyl-L-methionine is bound by residues G58, W60, D78, D96, and D120. Catalysis depends on K160, which acts as the Proton acceptor.

This sequence belongs to the class I-like SAM-binding methyltransferase superfamily. RNA methyltransferase RlmE family.

It localises to the cytoplasm. It catalyses the reaction uridine(2552) in 23S rRNA + S-adenosyl-L-methionine = 2'-O-methyluridine(2552) in 23S rRNA + S-adenosyl-L-homocysteine + H(+). Specifically methylates the uridine in position 2552 of 23S rRNA at the 2'-O position of the ribose in the fully assembled 50S ribosomal subunit. The sequence is that of Ribosomal RNA large subunit methyltransferase E from Methanococcus maripaludis (strain C7 / ATCC BAA-1331).